A 655-amino-acid chain; its full sequence is Probable replication restart protein PriA (655 aa).

Residues Cys368, Cys371, Cys377, Cys380, Cys396, Cys399, Cys408, and Cys411 each coordinate Zn(2+).

This sequence belongs to the helicase family. PriA subfamily. As to quaternary structure, component of the replication restart primosome. Requires Zn(2+) as cofactor.

Functionally, initiates the restart of stalled replication forks, which reloads the replicative helicase on sites other than the origin of replication. Recognizes and binds to abandoned replication forks and remodels them to uncover a helicase loading site. Promotes assembly of the primosome at these replication forks. This chain is Probable replication restart protein PriA, found in Mycobacterium bovis (strain ATCC BAA-935 / AF2122/97).